The primary structure comprises 464 residues: Septin homolog spn5 (464 aa).

The segment at 28 to 91 (QVDESSAKRS…VPNSNGKSIP (64 aa)) is disordered. 2 stretches are compositionally biased toward basic and acidic residues: residues 41–54 (ESRKSKDVTRKEQI) and 69–81 (TAKDKKTEFKQDE). The region spanning 115 to 370 (NGIDINLIVV…DTFRTEKLVA (256 aa)) is the Septin-type G domain. Residues 125–132 (GESSLGKT) form a G1 motif region. Residues 125–132 (GESSLGKT), T151, G177, 257–265 (KADTMTSDE), G304, and R319 each bind GTP. The interval 174 to 177 (DTPG) is G3 motif. Residues 256–259 (GKAD) form a G4 motif region. Positions 396–453 (LVEEALTKVMKEKYREKENNLELLETNLKTHHKDYKHALKKRITALEEEKNRLIKEIG) form a coiled coil.

This sequence belongs to the TRAFAC class TrmE-Era-EngA-EngB-Septin-like GTPase superfamily. Septin GTPase family. Component of the sporulation-specific septin complex composed of at least spn2, spn5, spn6 and spn7.

The protein localises to the nucleus. It localises to the forespore membrane. Functionally, septin-like protein involved in the correct orientation of forespore membrane extension during sporulation. The polypeptide is Septin homolog spn5 (spn5) (Schizosaccharomyces pombe (strain 972 / ATCC 24843) (Fission yeast)).